We begin with the raw amino-acid sequence, 361 residues long: Ferredoxin--NADP reductase 1 (361 aa).

FAD is bound by residues aspartate 44, glutamine 52, tyrosine 57, alanine 97, phenylalanine 142, aspartate 308, and serine 349.

It belongs to the ferredoxin--NADP reductase type 2 family. In terms of assembly, homodimer. The cofactor is FAD.

It catalyses the reaction 2 reduced [2Fe-2S]-[ferredoxin] + NADP(+) + H(+) = 2 oxidized [2Fe-2S]-[ferredoxin] + NADPH. The protein is Ferredoxin--NADP reductase 1 of Cupriavidus necator (strain ATCC 17699 / DSM 428 / KCTC 22496 / NCIMB 10442 / H16 / Stanier 337) (Ralstonia eutropha).